The primary structure comprises 584 residues: POTE ankyrin domain family member D (584 aa).

ANK repeat units follow at residues 172–201 (EKRTALHLASANGNSEVVQLLLDRRCQLNV), 205–234 (KKRTALIKAIQCQEDECVLMLLEHGADRNI), 238–267 (YGNTALHYAIYNEDKLMAKALLLYGADIES), 271–300 (CGLTPLLLGVHEQKQQVVKFLIKKKANLNV), 304–333 (YGRTALILAVCCGSASIVNLLLEQNVDVSS), and 337–366 (SGQTAREYAVSSHHHVICELLSDYKEKQML). A disordered region spans residues 369–502 (SSENSNPEQD…ILTNKQKQIE (134 aa)). 3 stretches are compositionally biased toward basic and acidic residues: residues 377–392 (QDLKLTSEEESQRLKV), 401–412 (MSQEPEINKDCD), and 466–481 (EEYHSDEQNDTRKQLS). Residues 482–498 (EEQNTGISQDEILTNKQ) show a composition bias toward polar residues. Positions 494–583 (LTNKQKQIEV…LNEEALTKTN (90 aa)) form a coiled coil.

It belongs to the POTE family. Expressed in prostate, ovary, testis, placenta and prostate cancer cell lines. Localizes to basal and terminal prostate epithelial cells.

The protein resides in the cell membrane. In Homo sapiens (Human), this protein is POTE ankyrin domain family member D (POTED).